Here is a 475-residue protein sequence, read N- to C-terminus: 3-hydroxyadipyl-CoA dehydrogenase (475 aa).

It belongs to the 3-hydroxyacyl-CoA dehydrogenase family. In terms of assembly, homotrimer.

The catalysed reaction is (3S)-3-hydroxyadipyl-CoA + NAD(+) = 3-oxoadipyl-CoA + NADH + H(+). It participates in aromatic compound metabolism; phenylacetate degradation. Functionally, catalyzes the oxidation of 3-hydroxyadipyl-CoA to yield 3-oxoadipyl-CoA. This Escherichia coli (strain K12) protein is 3-hydroxyadipyl-CoA dehydrogenase (paaH).